The chain runs to 147 residues: Thyrotropin subunit beta (147 aa).

The signal sequence occupies residues methionine 1 to proline 20. 6 cysteine pairs are disulfide-bonded: cysteine 22–cysteine 72, cysteine 36–cysteine 87, cysteine 39–cysteine 127, cysteine 47–cysteine 103, cysteine 51–cysteine 105, and cysteine 108–cysteine 115. Asparagine 43 carries an N-linked (GlcNAc...) asparagine glycan.

Belongs to the glycoprotein hormones subunit beta family. In terms of assembly, heterodimer of a common alpha chain and a unique beta chain which confers biological specificity to thyrotropin, lutropin, follitropin and gonadotropin. As to expression, pituitary gland. Higher levels seen in immature fishes than the mature fishes.

It localises to the secreted. In terms of biological role, indispensable for the control of thyroid structure and metabolism. May play some role in the biological processes of the immature fishes. The protein is Thyrotropin subunit beta (tshb) of Oncorhynchus mykiss (Rainbow trout).